Reading from the N-terminus, the 366-residue chain is Ribosomal RNA large subunit methyltransferase M (366 aa).

S-adenosyl-L-methionine is bound by residues Ser-188, 221 to 224, Asp-240, Asp-260, and Asp-277; that span reads CPGG. Catalysis depends on Lys-306, which acts as the Proton acceptor.

It belongs to the class I-like SAM-binding methyltransferase superfamily. RNA methyltransferase RlmE family. RlmM subfamily. Monomer.

The protein resides in the cytoplasm. The catalysed reaction is cytidine(2498) in 23S rRNA + S-adenosyl-L-methionine = 2'-O-methylcytidine(2498) in 23S rRNA + S-adenosyl-L-homocysteine + H(+). In terms of biological role, catalyzes the 2'-O-methylation at nucleotide C2498 in 23S rRNA. This is Ribosomal RNA large subunit methyltransferase M from Citrobacter koseri (strain ATCC BAA-895 / CDC 4225-83 / SGSC4696).